Reading from the N-terminus, the 249-residue chain is MAAGSTIDALGQFELHPVLGGLGESLRFSQSPVMMIVASVLVLAFLYVGMRPAAIVPGRLQAAAEICYDFIHDMAVDTIGPEGRAFFPFIFTLFFFILAGNYLGLLPFSFAFTSHIAVTLALALLVFVLAVIVSLKAQGPKFFAHFMPAGAPVALAPLLVPIEILSFLSRPVSLSIRLFANMVAGHVMLEMFAAFTIMLAGLGLFGDVLAVGPVVINVALMALELLVGALQAYVFAILTCIYLREAVAH.

6 helical membrane-spanning segments follow: residues 30–50 (QSPV…YVGM), 86–106 (FFPF…LGLL), 115–135 (HIAV…IVSL), 142–162 (FFAH…LVPI), 191–211 (MFAA…VLAV), and 218–238 (VALM…FAIL).

Belongs to the ATPase A chain family. In terms of assembly, F-type ATPases have 2 components, CF(1) - the catalytic core - and CF(0) - the membrane proton channel. CF(1) has five subunits: alpha(3), beta(3), gamma(1), delta(1), epsilon(1). CF(0) has three main subunits: a(1), b(2) and c(9-12). The alpha and beta chains form an alternating ring which encloses part of the gamma chain. CF(1) is attached to CF(0) by a central stalk formed by the gamma and epsilon chains, while a peripheral stalk is formed by the delta and b chains.

Its subcellular location is the cell inner membrane. In terms of biological role, key component of the proton channel; it plays a direct role in the translocation of protons across the membrane. The sequence is that of ATP synthase subunit a from Gluconacetobacter diazotrophicus (strain ATCC 49037 / DSM 5601 / CCUG 37298 / CIP 103539 / LMG 7603 / PAl5).